A 166-amino-acid polypeptide reads, in one-letter code: Cyclic pyranopterin monophosphate synthase (166 aa).

Residues 75-77 and 113-114 contribute to the substrate site; these read LCH and ME. Asp-128 is an active-site residue.

It belongs to the MoaC family. Homohexamer; trimer of dimers.

The enzyme catalyses (8S)-3',8-cyclo-7,8-dihydroguanosine 5'-triphosphate = cyclic pyranopterin phosphate + diphosphate. It functions in the pathway cofactor biosynthesis; molybdopterin biosynthesis. Catalyzes the conversion of (8S)-3',8-cyclo-7,8-dihydroguanosine 5'-triphosphate to cyclic pyranopterin monophosphate (cPMP). The polypeptide is Cyclic pyranopterin monophosphate synthase (Thermomicrobium roseum (strain ATCC 27502 / DSM 5159 / P-2)).